Here is a 717-residue protein sequence, read N- to C-terminus: Glycine--tRNA ligase beta subunit (717 aa).

Belongs to the class-II aminoacyl-tRNA synthetase family. As to quaternary structure, tetramer of two alpha and two beta subunits.

The protein localises to the cytoplasm. It catalyses the reaction tRNA(Gly) + glycine + ATP = glycyl-tRNA(Gly) + AMP + diphosphate. The sequence is that of Glycine--tRNA ligase beta subunit from Gloeothece citriformis (strain PCC 7424) (Cyanothece sp. (strain PCC 7424)).